Reading from the N-terminus, the 68-residue chain is Sec-independent protein translocase protein TatA (68 aa).

A helical membrane pass occupies residues 1 to 21; it reads MGSFSIWHWLIVLAVVLLLFG. The tract at residues 42–68 is disordered; the sequence is GMGDDEVASADKSVDGKTVDHKSDEVR. Residues 53–68 are compositionally biased toward basic and acidic residues; that stretch reads KSVDGKTVDHKSDEVR.

Belongs to the TatA/E family. The Tat system comprises two distinct complexes: a TatABC complex, containing multiple copies of TatA, TatB and TatC subunits, and a separate TatA complex, containing only TatA subunits. Substrates initially bind to the TatABC complex, which probably triggers association of the separate TatA complex to form the active translocon.

It localises to the cell inner membrane. Functionally, part of the twin-arginine translocation (Tat) system that transports large folded proteins containing a characteristic twin-arginine motif in their signal peptide across membranes. TatA could form the protein-conducting channel of the Tat system. This chain is Sec-independent protein translocase protein TatA, found in Rhizobium meliloti (strain 1021) (Ensifer meliloti).